We begin with the raw amino-acid sequence, 301 residues long: HTH-type transcriptional activator NagR (301 aa).

Residues 6–63 (IDLNLLVVFNQLLLDRSVSTAGEKLGLTQPAVSNSLKRLRAALKDDLFLRTSKGMEPT) enclose the HTH lysR-type domain. The segment at residues 23-42 (VSTAGEKLGLTQPAVSNSLK) is a DNA-binding region (H-T-H motif).

Belongs to the LysR transcriptional regulatory family.

Functionally, may regulate the expression of the naphthalene (nagA-F) and salicylate (nagG-M) metabolism genes. The chain is HTH-type transcriptional activator NagR from Ralstonia sp.